Consider the following 422-residue polypeptide: Serine--tRNA ligase (422 aa).

227 to 229 provides a ligand contact to L-serine; that stretch reads TSE. ATP contacts are provided by residues 258–260 and Val274; that span reads RRE. Glu281 contributes to the L-serine binding site. Residue 345 to 348 coordinates ATP; the sequence is ELTS. Thr380 serves as a coordination point for L-serine.

This sequence belongs to the class-II aminoacyl-tRNA synthetase family. Type-1 seryl-tRNA synthetase subfamily. Homodimer. The tRNA molecule binds across the dimer.

The protein localises to the cytoplasm. It catalyses the reaction tRNA(Ser) + L-serine + ATP = L-seryl-tRNA(Ser) + AMP + diphosphate + H(+). The enzyme catalyses tRNA(Sec) + L-serine + ATP = L-seryl-tRNA(Sec) + AMP + diphosphate + H(+). Its pathway is aminoacyl-tRNA biosynthesis; selenocysteinyl-tRNA(Sec) biosynthesis; L-seryl-tRNA(Sec) from L-serine and tRNA(Sec): step 1/1. Catalyzes the attachment of serine to tRNA(Ser). Is also able to aminoacylate tRNA(Sec) with serine, to form the misacylated tRNA L-seryl-tRNA(Sec), which will be further converted into selenocysteinyl-tRNA(Sec). This Thermobifida fusca (strain YX) protein is Serine--tRNA ligase.